Reading from the N-terminus, the 160-residue chain is D-aminoacyl-tRNA deacylase (160 aa).

Positions 137-138 (GP) match the Gly-cisPro motif, important for rejection of L-amino acids motif.

This sequence belongs to the DTD family. In terms of assembly, homodimer.

It localises to the cytoplasm. The catalysed reaction is glycyl-tRNA(Ala) + H2O = tRNA(Ala) + glycine + H(+). It catalyses the reaction a D-aminoacyl-tRNA + H2O = a tRNA + a D-alpha-amino acid + H(+). An aminoacyl-tRNA editing enzyme that deacylates mischarged D-aminoacyl-tRNAs. Also deacylates mischarged glycyl-tRNA(Ala), protecting cells against glycine mischarging by AlaRS. Acts via tRNA-based rather than protein-based catalysis; rejects L-amino acids rather than detecting D-amino acids in the active site. By recycling D-aminoacyl-tRNA to D-amino acids and free tRNA molecules, this enzyme counteracts the toxicity associated with the formation of D-aminoacyl-tRNA entities in vivo and helps enforce protein L-homochirality. This chain is D-aminoacyl-tRNA deacylase, found in Chloroflexus aurantiacus (strain ATCC 29364 / DSM 637 / Y-400-fl).